A 101-amino-acid chain; its full sequence is MAKKSKIARNDRRRETVERYAARRAELKEVIRRPGTPEPERNRAVEELRRQPRDASATRVRNRDSVDGRPRGYLRRFGLSRVRMREQAHAGFLPGVTTSSW.

The tract at residues 32–71 (RRPGTPEPERNRAVEELRRQPRDASATRVRNRDSVDGRPR) is disordered. Basic and acidic residues-rich tracts occupy residues 38–53 (EPERNRAVEELRRQPR) and 61–70 (RNRDSVDGRP).

The protein belongs to the universal ribosomal protein uS14 family. Part of the 30S ribosomal subunit. Contacts proteins S3 and S10.

Functionally, binds 16S rRNA, required for the assembly of 30S particles and may also be responsible for determining the conformation of the 16S rRNA at the A site. The sequence is that of Small ribosomal subunit protein uS14A from Streptomyces griseus subsp. griseus (strain JCM 4626 / CBS 651.72 / NBRC 13350 / KCC S-0626 / ISP 5235).